A 175-amino-acid polypeptide reads, in one-letter code: Probable RNA-binding protein EIF1AD (175 aa).

An S1-like domain is found at 5 to 89; sequence TKKRYITNKV…VKGEIEYILD (85 aa). The segment covering 116–128 has biased composition (basic and acidic residues); it reads EAKRGQTSDKMID. The interval 116–175 is disordered; it reads EAKRGQTSDKMIDDDMLPPSESEEEDESEGEETYDEDDVDDEEEEEFDTYNPNRMQAPSK. A compositionally biased stretch (acidic residues) spans 129 to 163; that stretch reads DDMLPPSESEEEDESEGEETYDEDDVDDEEEEEFD. A compositionally biased stretch (polar residues) spans 165–175; it reads YNPNRMQAPSK.

Belongs to the EIF1AD family.

The chain is Probable RNA-binding protein EIF1AD from Caenorhabditis elegans.